A 292-amino-acid chain; its full sequence is High-affinity heme uptake system protein IsdE (292 aa).

A signal peptide spans 1–19 (MRIIKYLTILVISVVILTS). Residue C20 is the site of N-palmitoyl cysteine attachment. C20 is lipidated: S-diacylglycerol cysteine. Residues 35-291 (RIVPTTVALT…QLYDLFYKDK (257 aa)) form the Fe/B12 periplasmic-binding domain. 6 residues coordinate heme: V41, A42, S60, Y61, M78, and H229.

The protein belongs to the bacterial solute-binding protein 8 family. It depends on heme b as a cofactor.

The protein localises to the cell membrane. Its function is as follows. Involved in heme (porphyrin) scavenging. Binds Fe(2+) and Fe(3+) heme but the largest fraction is Fe(2+) heme. Functions as a high-affinity heme binding protein and probably has a role in relaying heme-iron from cell wall-anchored isd proteins receptors to the probable permease IsdF. This Staphylococcus aureus (strain bovine RF122 / ET3-1) protein is High-affinity heme uptake system protein IsdE (isdE).